Reading from the N-terminus, the 35-residue chain is Tamulustoxin-2 (35 aa).

3 disulfides stabilise this stretch: C2/C22, C7/C31, and C11/C33.

It belongs to the short scorpion toxin superfamily. Potassium channel inhibitor family. In terms of tissue distribution, expressed by the venom gland.

The protein resides in the secreted. Its function is as follows. Blocks Kv1.6/KCNA6 potassium channels. This chain is Tamulustoxin-2, found in Hottentotta tamulus (Eastern Indian scorpion).